The primary structure comprises 1221 residues: Phosphoenolpyruvate carboxylase 2 (1221 aa).

Residue His156 is part of the active site. 2 disordered regions span residues 443 to 588 and 642 to 661; these read TAAE…DPTF and REPA…GGGG. Low complexity-rich tracts occupy residues 503–513 and 550–564; these read TTTATAAAAAA and PFRE…TAAS. Composition is skewed to gly residues over residues 565 to 575 and 648 to 661; these read GGAGGGGGGGA and AHGG…GGGG. Lys886 is a catalytic residue.

The protein belongs to the PEPCase type 1 family. The cofactor is Mg(2+).

It localises to the cytoplasm. It carries out the reaction oxaloacetate + phosphate = phosphoenolpyruvate + hydrogencarbonate. Its function is as follows. Through the carboxylation of phosphoenolpyruvate (PEP) it forms oxaloacetate, a four-carbon dicarboxylic acid source for the tricarboxylic acid cycle. The sequence is that of Phosphoenolpyruvate carboxylase 2 from Chlamydomonas reinhardtii (Chlamydomonas smithii).